The chain runs to 1159 residues: MPGGGPAMDDYMETLKDEEEALWDNVECNRHMLSRYINPAKLTPYLRQCKVIDEQDEDEVLNAPMLPSKINRAGRLLDILHTKGQRGYVVFLESLEFYYPELYKLVTGKEPTRRFSTIVVEEGHEGLTHFLMNEVIKLQQQVKAKDLQRCELLAKSRQLEDEKKQLSLIRVELLTFQERYYKMKEERDSYNDELVKVKDDNYNLAMRYAQLSEEKNMAVMRSRDLQLEIDQLKHRLNKMEEECKLERNQSLKLKNDIENRPRKEQVLELERENEMLKTKIQELQSIIQAGKRSLPDSDKAILDILEHDRKEALEDRQELVNKIYNLQEEVRQAEELRDKYLEEKEDLELKCSTLGKDCEMYKHRMNTVMLQLEEVERERDQAFHSRDEAQTQYSQCLIEKDKYRKQIRELEEKNDEMRIEMVRREACIVNLESKLRRLSKDNGSLDQSLPRHLPATIISQNLGDTSPRTNGQEADDSSTSEESPEDSKYFLPYHPPRRRMNLKGIQLQRAKSPISMKQASEFQALMRTVKGHEEDFTDGSPSSSRSLPVTSSFSKMQPHRSRSSIMSITAEPPGNDSIVRRCKEDAPHRSTVEEDNDSCGFDALDLDDENHERYSFGPPSIHSSSSSHQSEGLDAYDLEQVNLMLRKFSLERPFRPSVTSGGHVRGTGPLVQHTTLNGDGLITQLTLLGGNARGSFIHSVKPGSLAERAGLREGHQLLLLEGCIRGERQSVPLDACTKEEARWTIQRCSGLITLHYKVNHEGYRKLLKEMEDGLITSGDSFYIRLNLNISSQLDACSMSLKCDDVVHVLDTMYQDRHEWLCARVDPFTDQDLDTGTIPSYSRAQQLLLVKLQRLVHRGNREEADSAHHTLRSLRNTLQPEEMLSTSDPRVSPRLSRASFFFGQLLQFVSRSENKYKRMNSNERVRIISGSPLGSLSRSSLDATKLLTEKHEELDPENELSRNLTLIPYSLVRAFHCERRRPVLFTPTMLAKTLVQKLLNSGGAMEFTICKSDIVTRDEFLRKQKTETIIYSREKNPNTFECIVPANIEAVAAKNKHCLLEAGIGCVRDLIKCKVYPIVLLIRVSEKNIKRFRKLLPRPETEEEFLRVCRLKEKELEALPCLYATVEAEMWSSVEELLRVLKDKIVEEQRKTIWVDEDQL.

In terms of domain architecture, CARD spans 18 to 110 (EEEALWDNVE…ELYKLVTGKE (93 aa)). The segment at 111–128 (PTRRFSTIVVEEGHEGLT) is linker. Residues 176 to 449 (FQERYYKMKE…KDNGSLDQSL (274 aa)) adopt a coiled-coil conformation. The interval 441–496 (DNGSLDQSLPRHLPATIISQNLGDTSPRTNGQEADDSSTSEESPEDSKYFLPYHPP) is disordered. A phosphoserine mark is found at serine 448 and serine 466. Residues 450–671 (PRHLPATIIS…GHVRGTGPLV (222 aa)) are inhibitory domain (ID). Positions 457 to 472 (IISQNLGDTSPRTNGQ) are enriched in polar residues. Acidic residues predominate over residues 473–484 (EADDSSTSEESP). Phosphoserine is present on residues serine 512 and serine 540. A disordered region spans residues 532-578 (HEEDFTDGSPSSSRSLPVTSSFSKMQPHRSRSSIMSITAEPPGNDSI). Over residues 540 to 554 (SPSSSRSLPVTSSFS) the composition is skewed to low complexity. Serine 564 is subject to Phosphoserine; by PKC/PRKCB and PKC/PRKCQ. The residue at position 598 (serine 598) is a Phosphoserine. The interval 610-631 (NHERYSFGPPSIHSSSSSHQSE) is disordered. Over residues 620 to 630 (SIHSSSSSHQS) the composition is skewed to low complexity. Serine 649 and serine 657 each carry phosphoserine; by PKC/PRKCB and PKC/PRKCQ. The PDZ domain maps to 672–760 (QHTTLNGDGL…LITLHYKVNH (89 aa)). Phosphoserine is present on residues serine 891 and serine 930. Positions 978-1145 (RRRPVLFTPT…LLRVLKDKIV (168 aa)) constitute a Guanylate kinase-like domain.

In terms of assembly, homodimer; disulfide-linked. Homomultimer; polymerizes following activation, forming a nucleating helical template that seeds BCL10-filament formation via a CARD-CARD interaction. Interacts (via CARD domain) with BCL10 (via CARD domain); interaction takes place following CARD11 activation and polymerization, leading to the formation of a filamentous CBM complex assembly. Component of a CBM complex (CARD11-BCL10-MALT1) complex involved in NF-kappa-B activation. Found in a membrane raft complex, at least composed of BCL10, CARD11, DPP4 and IKBKB. Interacts (via PDZ domain) with DPP4 (via cytoplasmic tail). Phosphorylation at Ser-564, Ser-649 and Ser-657 by PRKCB and PRKCQ leads to a shift from an inactive to an active form that activates the NF-kappa-B signaling.

It is found in the cytoplasm. It localises to the membrane raft. With respect to regulation, maintained in an autoinhibited state via homodimerization in which the CARD domain forms an extensive interaction with the adjacent linker and coiled-coil regions. Activation downstream of T-cell receptor (TCR) by phosphorylation by PRKCB and PRKCQ triggers CARD11 homooligomerization and BCL10 recruitment, followed by activation of NF-kappa-B. Adapter protein that plays a key role in adaptive immune response by transducing the activation of NF-kappa-B downstream of T-cell receptor (TCR) and B-cell receptor (BCR) engagement. Transduces signals downstream TCR or BCR activation via the formation of a multiprotein complex together with BCL10 and MALT1 that induces NF-kappa-B and MAP kinase p38 (MAPK11, MAPK12, MAPK13 and/or MAPK14) pathways. Upon activation in response to TCR or BCR triggering, CARD11 homooligomerizes to form a nucleating helical template that recruits BCL10 via CARD-CARD interaction, thereby promoting polymerization of BCL10 and subsequent recruitment of MALT1: this leads to I-kappa-B kinase (IKK) phosphorylation and degradation, and release of NF-kappa-B proteins for nuclear translocation. Its binding to DPP4 induces T-cell proliferation and NF-kappa-B activation in a T-cell receptor/CD3-dependent manner. Promotes linear ubiquitination of BCL10 by promoting the targeting of BCL10 to RNF31/HOIP. Stimulates the phosphorylation of BCL10. Also activates the TORC1 signaling pathway. The chain is Caspase recruitment domain-containing protein 11 from Mus musculus (Mouse).